The sequence spans 367 residues: Choline-phosphate cytidylyltransferase A (367 aa).

Residue M1 is modified to N-acetylmethionine. The tract at residues 1-32 is disordered; the sequence is MDAQSSAKVNSRKRRKEAPGPNGATEEDGIPS. An N6-acetyllysine modification is found at K8. Positions 84, 85, 92, and 122 each coordinate CTP. K122 and W151 together coordinate phosphocholine. CTP-binding residues include H168, D169, Y173, Q195, R196, T197, and I200. 2 amphipathic regions span residues 228–287 and 298–315; these read KELN…EFIG and ALKH…QAIS. The residue at position 233 (S233) is a Phosphoserine. The segment at 272-293 is autoinhibitory (AI); it reads IDLIQKWEEKSREFIGSFLEMF. The tract at residues 313 to 367 is disordered; it reads AISPKQSPSSSPTHERSPSPSFRWPFSGKTSPSSSPASLSRCRAVTCDISEDEED. Phosphoserine is present on residues S315, S319, S321, S322, and S323. Polar residues predominate over residues 315–324; sequence SPKQSPSSSP. Repeat 1 spans residues 319–324; that stretch reads SPSSSP. Positions 319 to 348 are 3 X repeats; sequence SPSSSPTHERSPSPSFRWPFSGKTSPSSSP. T325 bears the Phosphothreonine mark. 3 positions are modified to phosphoserine: S329, S331, and S333. The 2; approximate repeat unit spans residues 329–333; it reads SPSPS. The segment covering 330–352 has biased composition (low complexity); that stretch reads PSPSFRWPFSGKTSPSSSPASLS. T342 carries the post-translational modification Phosphothreonine. Phosphoserine is present on residues S343, S345, S346, S347, S350, and S352. The stretch at 343-348 is repeat 3; it reads SPSSSP. Position 358 is a phosphothreonine (T358). S362 bears the Phosphoserine mark.

This sequence belongs to the cytidylyltransferase family. Homodimer. Post-translationally, the serine residues of the C-terminus are phosphorylated. The inactive soluble form is stabilized by phosphorylation, the active membrane bound form is promoted by anionic lipids or diacylglycerol, and is stabilized by dephosphorylation. Monoubiquitinated by the SCF(FBXL2) complex, leading to proteasomal degradation. Brain and liver (at protein level). Also found in heart, kidney, spleen, lung, skeletal muscle, ovary and testis.

The protein localises to the cytoplasm. The protein resides in the cytosol. It localises to the membrane. Its subcellular location is the endoplasmic reticulum membrane. It is found in the nucleus. The catalysed reaction is phosphocholine + CTP + H(+) = CDP-choline + diphosphate. The protein operates within phospholipid metabolism; phosphatidylcholine biosynthesis; phosphatidylcholine from phosphocholine: step 1/2. With respect to regulation, interconverts between an inactive cytosolic form and an active membrane-bound form. Activation involves disruption of an inhibitory interaction between helices at the base of the active site and the autoinhibitory (AI) region. Catalyzes the key rate-limiting step in the CDP-choline pathway for phosphatidylcholine biosynthesis. This is Choline-phosphate cytidylyltransferase A (Pcyt1a) from Mus musculus (Mouse).